The primary structure comprises 447 residues: M-phase inducer phosphatase 3 (447 aa).

Ser2 is modified (N-acetylserine). Phosphoserine is present on residues Ser20, Ser38, Ser56, Ser60, and Ser63. Thr66 is modified (phosphothreonine; by CDK1). Polar residues predominate over residues 81 to 90; the sequence is MSASPLTTSA. The disordered stretch occupies residues 81-109; the sequence is MSASPLTTSADLEDNGSLDSSGPLDRQLT. At Ser128 the chain carries Phosphoserine. Phosphothreonine is present on Thr129. The residue at position 192 (Ser192) is a Phosphoserine; by CDK1. A phosphoserine; by PLK3 mark is found at Ser213 and Ser220. The region spanning 294 to 401 is the Rhodanese domain; it reads VIERFYIIDC…FFPEYMELCD (108 aa). Cys350 is a catalytic residue. Ser445 bears the Phosphoserine mark.

Belongs to the MPI phosphatase family. In terms of assembly, interacts with MAPK14 and 14-3-3 proteins. When phosphorylated on Ser-128 and/or Thr-129, interacts with PLK1. Interacts with MARK3/C-TAK1. Post-translationally, phosphorylated by PLK4. Phosphorylated by PLK1, leading to activate the phosphatase activity. Phosphorylated by CHEK1 and MAPKAPK2. This phosphorylation creates a binding site for 14-3-3 protein and inhibits the phosphatase activity. Phosphorylation by PLK3 at Ser-213 promotes nuclear translocation. Ser-220 is a minor phosphorylation site. Phosphorylation by CDK1 occurs at G2 and G2-M transition and leads to increased activity. As to expression, spleen and thymus.

The protein resides in the nucleus. It carries out the reaction O-phospho-L-tyrosyl-[protein] + H2O = L-tyrosyl-[protein] + phosphate. In terms of biological role, functions as a dosage-dependent inducer in mitotic control. Tyrosine protein phosphatase required for progression of the cell cycle. When phosphorylated, highly effective in activating G2 cells into prophase. Directly dephosphorylates CDK1 and activates its kinase activity. The sequence is that of M-phase inducer phosphatase 3 (Cdc25c) from Mus musculus (Mouse).